Reading from the N-terminus, the 312-residue chain is Ribosomal protein L11 methyltransferase (312 aa).

4 residues coordinate S-adenosyl-L-methionine: threonine 163, glycine 184, aspartate 206, and asparagine 248.

The protein belongs to the methyltransferase superfamily. PrmA family.

Its subcellular location is the cytoplasm. The catalysed reaction is L-lysyl-[protein] + 3 S-adenosyl-L-methionine = N(6),N(6),N(6)-trimethyl-L-lysyl-[protein] + 3 S-adenosyl-L-homocysteine + 3 H(+). Methylates ribosomal protein L11. The polypeptide is Ribosomal protein L11 methyltransferase (Clostridium botulinum (strain 657 / Type Ba4)).